The chain runs to 177 residues: MDIAIQHPWLRRPLFPSSIFPSRIFDQNFGEHFDPDLFPSFSSMLSPFYWRMGAPMARMPSWAQTGLSELRLDKDKFAIHLDVKHFTPEELRVKILGDFIEVQAQHEERQDEHGYVSREFHRKYKVPAGVDPLVITCSLSADGVLTITGPRKVADVPERSVPISRDEKPAVAGPQQK.

Methionine 1 is subject to N-acetylmethionine. The 109-residue stretch at 58–166 (RMPSWAQTGL…PERSVPISRD (109 aa)) folds into the sHSP domain. Positions 85, 106, 108, 113, and 121 each coordinate Zn(2+). Over residues 155–169 (DVPERSVPISRDEKP) the composition is skewed to basic and acidic residues. Residues 155-177 (DVPERSVPISRDEKPAVAGPQQK) are disordered.

Belongs to the small heat shock protein (HSP20) family. Heteromer composed of three CRYAA and one CRYAB subunits. Aggregates with homologous proteins, including the small heat shock protein HSPB1, to form large heteromeric complexes. Inter-subunit bridging via zinc ions enhances stability, which is crucial as there is no protein turn over in the lens. Interacts with HSPBAP1 and TTN/titin.

In terms of biological role, may contribute to the transparency and refractive index of the lens. The polypeptide is Alpha-crystallin B chain (CRYAB) (Squalus acanthias (Spiny dogfish)).